Consider the following 753-residue polypeptide: Catalase-peroxidase (753 aa).

The segment at residues 91 to 243 is a cross-link (tryptophyl-tyrosyl-methioninium (Trp-Tyr) (with M-269)); that stretch reads WHSAGTYRIG…LGAVQMGLIY (153 aa). His92 (proton acceptor) is an active-site residue. The tryptophyl-tyrosyl-methioninium (Tyr-Met) (with W-91) cross-link spans 243-269; the sequence is YVNPEGPDGNPDPLAAAHDIRETFARM. Residue His284 coordinates heme b.

Belongs to the peroxidase family. Peroxidase/catalase subfamily. As to quaternary structure, homodimer or homotetramer. Requires heme b as cofactor. Post-translationally, formation of the three residue Trp-Tyr-Met cross-link is important for the catalase, but not the peroxidase activity of the enzyme.

The enzyme catalyses H2O2 + AH2 = A + 2 H2O. It catalyses the reaction 2 H2O2 = O2 + 2 H2O. Its function is as follows. Bifunctional enzyme with both catalase and broad-spectrum peroxidase activity. The sequence is that of Catalase-peroxidase from Paraburkholderia xenovorans (strain LB400).